The following is a 286-amino-acid chain: NADPH-dependent 7-cyano-7-deazaguanine reductase (286 aa).

92–94 is a substrate binding site; sequence IES. 94–95 serves as a coordination point for NADPH; sequence SK. The active-site Thioimide intermediate is Cys-194. Asp-201 serves as the catalytic Proton donor. 233-234 lines the substrate pocket; that stretch reads HE. NADPH is bound at residue 262 to 263; that stretch reads RG.

This sequence belongs to the GTP cyclohydrolase I family. QueF type 2 subfamily. As to quaternary structure, homodimer.

The protein resides in the cytoplasm. The catalysed reaction is 7-aminomethyl-7-carbaguanine + 2 NADP(+) = 7-cyano-7-deazaguanine + 2 NADPH + 3 H(+). It functions in the pathway tRNA modification; tRNA-queuosine biosynthesis. In terms of biological role, catalyzes the NADPH-dependent reduction of 7-cyano-7-deazaguanine (preQ0) to 7-aminomethyl-7-deazaguanine (preQ1). This is NADPH-dependent 7-cyano-7-deazaguanine reductase from Shewanella oneidensis (strain ATCC 700550 / JCM 31522 / CIP 106686 / LMG 19005 / NCIMB 14063 / MR-1).